We begin with the raw amino-acid sequence, 123 residues long: Sirohydrochlorin cobaltochelatase (123 aa).

Catalysis depends on histidine 9, which acts as the Proton acceptor. Histidine 9 lines the Co(2+) pocket. Substrate contacts are provided by residues glutamate 43 and 68–73 (FAAGMH). Residue histidine 73 participates in Co(2+) binding.

It belongs to the CbiX family. CbiXS subfamily. As to quaternary structure, homotetramer; dimer of dimers.

It catalyses the reaction Co-sirohydrochlorin + 2 H(+) = sirohydrochlorin + Co(2+). The protein operates within cofactor biosynthesis; adenosylcobalamin biosynthesis; cob(II)yrinate a,c-diamide from sirohydrochlorin (anaerobic route): step 1/10. In terms of biological role, catalyzes the insertion of Co(2+) into sirohydrochlorin as part of the anaerobic pathway to cobalamin biosynthesis. The polypeptide is Sirohydrochlorin cobaltochelatase (Sulfolobus acidocaldarius (strain ATCC 33909 / DSM 639 / JCM 8929 / NBRC 15157 / NCIMB 11770)).